The sequence spans 228 residues: MATSLTWHDVLAQEKQQSYFINTLEFVGKERSAGKTIYPPQKDVFNAFRFTELHQVKVVILGQDPYHGPNQAHGLSFSVRPGVPAPPSLGNIYKELASDIPGFEIPRHGFLQSWAEQGVLLLNTVLTVEAGQAHSHANLGWETFTDRVIAALNEQREGLVFLLWGSHAQKKGNIIDPQRHHVLKSPHPSPLSAHRGFLGCKHFSQANQLLEQQGLSAIDWTPRLPEEA.

Catalysis depends on D64, which acts as the Proton acceptor.

It belongs to the uracil-DNA glycosylase (UDG) superfamily. UNG family.

The protein resides in the cytoplasm. It carries out the reaction Hydrolyzes single-stranded DNA or mismatched double-stranded DNA and polynucleotides, releasing free uracil.. In terms of biological role, excises uracil residues from the DNA which can arise as a result of misincorporation of dUMP residues by DNA polymerase or due to deamination of cytosine. This Pectobacterium atrosepticum (strain SCRI 1043 / ATCC BAA-672) (Erwinia carotovora subsp. atroseptica) protein is Uracil-DNA glycosylase.